The following is a 504-amino-acid chain: ATP synthase subunit alpha (504 aa).

Position 169-176 (169-176 (GDRQTGKT)) interacts with ATP.

The protein belongs to the ATPase alpha/beta chains family. As to quaternary structure, F-type ATPases have 2 components, CF(1) - the catalytic core - and CF(0) - the membrane proton channel. CF(1) has five subunits: alpha(3), beta(3), gamma(1), delta(1), epsilon(1). CF(0) has three main subunits: a(1), b(2) and c(9-12). The alpha and beta chains form an alternating ring which encloses part of the gamma chain. CF(1) is attached to CF(0) by a central stalk formed by the gamma and epsilon chains, while a peripheral stalk is formed by the delta and b chains.

It is found in the cell membrane. It catalyses the reaction ATP + H2O + 4 H(+)(in) = ADP + phosphate + 5 H(+)(out). Functionally, produces ATP from ADP in the presence of a proton gradient across the membrane. The alpha chain is a regulatory subunit. This is ATP synthase subunit alpha from Clostridium kluyveri (strain NBRC 12016).